A 146-amino-acid chain; its full sequence is VHWTETERATIETVYQKLHLDEVGREALTRLFIVYPWTTRYFKSFGDLSSSKAIASNPKVTEHGLKVMNKLTEAIHNLDHIKDLFHKLSEKHFHELHVDPQNFKLLSKCLIIVLATKLGKQLTPDVQATWEKLLSVVVAALSREYH.

A Globin domain is found at 2-146 (HWTETERATI…VVAALSREYH (145 aa)). Heme b contacts are provided by H63 and H92.

This sequence belongs to the globin family. As to quaternary structure, heterotetramer of two alpha chains and two beta chains (an easy dimerization is also reported). Red blood cells.

Its function is as follows. Involved in oxygen transport from the lung to the various peripheral tissues. In Latimeria chalumnae (Coelacanth), this protein is Hemoglobin subunit beta (HBB).